Consider the following 371-residue polypeptide: Lombricine kinase (371 aa).

A Phosphagen kinase N-terminal domain is found at Met-1–Gly-86. The Phosphagen kinase C-terminal domain maps to Tyr-113–Leu-355. Residues Ser-116–Arg-120, His-179, Arg-224, Arg-280, Arg-308–Glu-313, and Asp-323 each bind ATP.

It belongs to the ATP:guanido phosphotransferase family. As to quaternary structure, homodimer.

It carries out the reaction L-lombricine + ATP = N-phospho-L-lombricine + ADP + H(+). In Eisenia fetida (Red wiggler worm), this protein is Lombricine kinase.